Reading from the N-terminus, the 80-residue chain is Acyl carrier protein (80 aa).

A Carrier domain is found at 4–79 (EAILEKVRSI…DAVKYIEDKQ (76 aa)). O-(pantetheine 4'-phosphoryl)serine is present on Ser39.

The protein belongs to the acyl carrier protein (ACP) family. In terms of processing, 4'-phosphopantetheine is transferred from CoA to a specific serine of apo-ACP by AcpS. This modification is essential for activity because fatty acids are bound in thioester linkage to the sulfhydryl of the prosthetic group.

The protein resides in the cytoplasm. It participates in lipid metabolism; fatty acid biosynthesis. In terms of biological role, carrier of the growing fatty acid chain in fatty acid biosynthesis. This Synechococcus sp. (strain CC9902) protein is Acyl carrier protein.